The primary structure comprises 227 residues: NADH-quinone oxidoreductase subunit C (227 aa).

It belongs to the complex I 30 kDa subunit family. In terms of assembly, NDH-1 is composed of 14 different subunits. Subunits NuoB, C, D, E, F, and G constitute the peripheral sector of the complex.

Its subcellular location is the cell inner membrane. It catalyses the reaction a quinone + NADH + 5 H(+)(in) = a quinol + NAD(+) + 4 H(+)(out). NDH-1 shuttles electrons from NADH, via FMN and iron-sulfur (Fe-S) centers, to quinones in the respiratory chain. The immediate electron acceptor for the enzyme in this species is believed to be ubiquinone. Couples the redox reaction to proton translocation (for every two electrons transferred, four hydrogen ions are translocated across the cytoplasmic membrane), and thus conserves the redox energy in a proton gradient. The protein is NADH-quinone oxidoreductase subunit C of Coxiella burnetii (strain Dugway 5J108-111).